The chain runs to 129 residues: Small ribosomal subunit protein uS11 (129 aa).

The protein belongs to the universal ribosomal protein uS11 family. Part of the 30S ribosomal subunit. Interacts with proteins S7 and S18. Binds to IF-3.

Functionally, located on the platform of the 30S subunit, it bridges several disparate RNA helices of the 16S rRNA. Forms part of the Shine-Dalgarno cleft in the 70S ribosome. This chain is Small ribosomal subunit protein uS11, found in Lactobacillus gasseri (strain ATCC 33323 / DSM 20243 / BCRC 14619 / CIP 102991 / JCM 1131 / KCTC 3163 / NCIMB 11718 / NCTC 13722 / AM63).